The sequence spans 307 residues: Nucleotide-binding protein Acid345_3782 (307 aa).

31–38 serves as a coordination point for ATP; that stretch reads GLSGSGKA. A GTP-binding site is contributed by 81–84; the sequence is DIRE.

Belongs to the RapZ-like family.

Functionally, displays ATPase and GTPase activities. The sequence is that of Nucleotide-binding protein Acid345_3782 from Koribacter versatilis (strain Ellin345).